A 75-amino-acid polypeptide reads, in one-letter code: MSSIAQDLRKKDSLELEKIVIELKAKLLELRFAAANGEAEKLHTAKEIRKTIARALTILNERELAEKLNNKEANK.

It belongs to the universal ribosomal protein uL29 family.

The chain is Large ribosomal subunit protein uL29 from Ureaplasma urealyticum serovar 10 (strain ATCC 33699 / Western).